A 170-amino-acid chain; its full sequence is MSEHVSPQELRRKWKLANAEPLEGGHRLEAYRALAQSCPAFVPNLLSLSRTLLAGRNEAADPEAAVSEAEQVLRSASDVSAGAPEPLLALGHFLVSVRQAPDEAERAFSSAASAAMALLEEAWAGWIHALGAQGQLEAALEVEERARSLFPSSKAISQAVAFARAQSGTR.

This is an uncharacterized protein from Myxococcus xanthus.